Consider the following 680-residue polypeptide: Zinc finger protein OBI1 (680 aa).

Residues 16–87 (VSFEDVAVDF…AEATEQCLPG (72 aa)) enclose the KRAB domain. A C2H2-type 1; degenerate zinc finger spans residues 263 to 280 (CHKIFPNKTELSNHDAMH). 8 C2H2-type zinc fingers span residues 455–477 (FRCN…QRMH), 483–505 (HECK…QGIH), 511–533 (YECN…ERTH), 539–561 (FECK…QKIH), 567–589 (HKCK…QKTH), 595–617 (YECK…ETTH), 623–645 (YECK…QVIH), and 651–673 (FECK…QKIH).

Post-translationally, polyubiquitinated, leading to its degradation via the ubiquitin-proteasome pathway. Expressed during osteogenic differentiation where levels increase from the first days of differentiation and remain high during the whole process. Highly expressed in lung.

The protein resides in the nucleus. Its function is as follows. May modulate osteogenic differentiation, at least in part, through the bone morphogenetic protein (BMP) signaling pathway, increasing RUNX2 activation and leading to osteoblast commitment and maturation. The sequence is that of Zinc finger protein OBI1 (ObI1) from Mus musculus (Mouse).